Reading from the N-terminus, the 493-residue chain is Glutamyl-tRNA(Gln) amidotransferase subunit A (493 aa).

Catalysis depends on charge relay system residues Lys-78 and Ser-159. Ser-183 serves as the catalytic Acyl-ester intermediate.

It belongs to the amidase family. GatA subfamily. Heterotrimer of A, B and C subunits.

The catalysed reaction is L-glutamyl-tRNA(Gln) + L-glutamine + ATP + H2O = L-glutaminyl-tRNA(Gln) + L-glutamate + ADP + phosphate + H(+). Functionally, allows the formation of correctly charged Gln-tRNA(Gln) through the transamidation of misacylated Glu-tRNA(Gln) in organisms which lack glutaminyl-tRNA synthetase. The reaction takes place in the presence of glutamine and ATP through an activated gamma-phospho-Glu-tRNA(Gln). This chain is Glutamyl-tRNA(Gln) amidotransferase subunit A, found in Sphingopyxis alaskensis (strain DSM 13593 / LMG 18877 / RB2256) (Sphingomonas alaskensis).